The chain runs to 370 residues: Translocating chain-associated membrane protein 2 (370 aa).

The Cytoplasmic portion of the chain corresponds to 1–22 (MAFRRRTKSYPLFSQEFIIHNH). The helical transmembrane segment at 23-43 (ADIGFCLVLCVLIGLMFEVTA) threads the bilayer. Topologically, residues 44-75 (KTAFLFILPQYNISVPTADSETVHYHYGPKDL) are extracellular. N-linked (GlcNAc...) asparagine glycosylation occurs at Asn55. Residues 76–96 (VTILFYVVITIIFHAVVQEYI) form a helical membrane-spanning segment. Residues 97–119 (LDKISKRLHLSKVKHSKFNESGQ) are Cytoplasmic-facing. Positions 112 to 321 (SKFNESGQLL…HSQLRHWREY (210 aa)) constitute a TLC domain. The chain crosses the membrane as a helical span at residues 120–140 (LLVFHLSAVAWCFYVIVTEGY). The Extracellular segment spans residues 141–159 (LTNPRSLWEDYPHVYLSFQ). Residues 160-180 (VKFFYLGQLAYWLHSLPELYF) traverse the membrane as a helical segment. The Cytoplasmic portion of the chain corresponds to 181–191 (QKVRKEEVPRQ). Residues 192–209 (LQYICLYLLHITGAYLLN) traverse the membrane as a helical segment. Topologically, residues 210-214 (LSRLG) are extracellular. A helical membrane pass occupies residues 215-235 (LILLLLQYSTEALFHMARLFH). Residues 236-250 (FADENNERLFNAWAA) are Cytoplasmic-facing. Residues 251–271 (VFGVTRLFILTLAVLTIGFGL) traverse the membrane as a helical segment. Residues 272–287 (ARVENQVFDPEKGNFN) lie on the Extracellular side of the membrane. The helical transmembrane segment at 288-308 (TLPCRLGMLLLVCVAQAWLMW) threads the bilayer. The Cytoplasmic segment spans residues 309–370 (RFIHSQLRHW…SSRTKKLKSP (62 aa)). Residues 332–370 (SAVPRPPAKLLKREPGYHENGVVKAENGTSSRTKKLKSP) form a disordered region.

It belongs to the TRAM family. As to quaternary structure, interacts with COL1A1. Interacts with SERCA2B.

It localises to the membrane. Its function is as follows. Necessary for collagen type I synthesis. May couple the activity of the ER Ca(2+) pump SERCA2B with the activity of the translocon. This coupling may increase the local Ca(2+) concentration at the site of collagen synthesis, and a high Ca(2+) concentration may be necessary for the function of molecular chaperones involved in collagen folding. Required for proper insertion of the first transmembrane helix N-terminus of TM4SF20 into the ER lumen, may act as a ceramide sensor for regulated alternative translocation (RAT). This chain is Translocating chain-associated membrane protein 2 (Tram2), found in Mus musculus (Mouse).